We begin with the raw amino-acid sequence, 184 residues long: Dual-action ribosomal maturation protein DarP (184 aa).

The segment at 1–21 (MYKHPDEEWLDEIPGQQENED) is disordered.

Belongs to the DarP family.

The protein localises to the cytoplasm. Member of a network of 50S ribosomal subunit biogenesis factors which assembles along the 30S-50S interface, preventing incorrect 23S rRNA structures from forming. Promotes peptidyl transferase center (PTC) maturation. The sequence is that of Dual-action ribosomal maturation protein DarP from Edwardsiella ictaluri (strain 93-146).